The chain runs to 260 residues: Isopentenyl phosphate kinase (260 aa).

6-10 (KLGGS) contributes to the ATP binding site. G55 provides a ligand contact to substrate. G56 is an ATP binding site. The substrate site is built by H60 and G159. ATP-binding residues include D180, G217, and K221.

This sequence belongs to the isopentenyl phosphate kinase family. As to quaternary structure, homodimer.

It carries out the reaction isopentenyl phosphate + ATP = isopentenyl diphosphate + ADP. Catalyzes the formation of isopentenyl diphosphate (IPP), the building block of all isoprenoids. Has no activity with farnesyl phosphate. The chain is Isopentenyl phosphate kinase from Methanocaldococcus jannaschii (strain ATCC 43067 / DSM 2661 / JAL-1 / JCM 10045 / NBRC 100440) (Methanococcus jannaschii).